A 76-amino-acid polypeptide reads, in one-letter code: High-potential iron-sulfur protein isozyme 2 (76 aa).

[4Fe-4S] cluster contacts are provided by Cys38, Cys41, Cys54, and Cys70.

This sequence belongs to the high-potential iron-sulfur protein (HiPIP) family. In terms of assembly, homodimer.

Its function is as follows. Specific class of high-redox-potential 4Fe-4S ferredoxins. Functions in anaerobic electron transport in most purple and in some other photosynthetic bacteria and in at least one genus (Paracoccus) of halophilic, denitrifying bacteria. The sequence is that of High-potential iron-sulfur protein isozyme 2 (hip2) from Halorhodospira halophila (Ectothiorhodospira halophila).